The chain runs to 67 residues: VAETHDHRVSEIISKKFDVVLAGGITFENVRKIVNSVKPVGIDVSSGVELNNRKNELLIKKICHNLI.

Belongs to the TrpF family.

The enzyme catalyses N-(5-phospho-beta-D-ribosyl)anthranilate = 1-(2-carboxyphenylamino)-1-deoxy-D-ribulose 5-phosphate. The protein operates within amino-acid biosynthesis; L-tryptophan biosynthesis; L-tryptophan from chorismate: step 3/5. This Methanococcus voltae protein is N-(5'-phosphoribosyl)anthranilate isomerase (trpF).